Reading from the N-terminus, the 179-residue chain is MSRIGKRPITIPNKVTVNIDGSHVAVKGPKGELQRTLPTLVIVEQDEGVLRVVRQDDSRTARQRHGLCRTLVSNMVEGVSKGFEKRLEIQGVGYRAAAQGSKLTLNVGYSKPVEMDMPSGIGVAVEKNTEITITGIDKEIVGNVAAKIRAVRPPEPYKGKGIRYKGEVVRRKAGKTGKK.

This sequence belongs to the universal ribosomal protein uL6 family. Part of the 50S ribosomal subunit.

In terms of biological role, this protein binds to the 23S rRNA, and is important in its secondary structure. It is located near the subunit interface in the base of the L7/L12 stalk, and near the tRNA binding site of the peptidyltransferase center. This chain is Large ribosomal subunit protein uL6, found in Gloeothece citriformis (strain PCC 7424) (Cyanothece sp. (strain PCC 7424)).